The primary structure comprises 308 residues: UDP-N-acetylenolpyruvoylglucosamine reductase (308 aa).

The 164-residue stretch at 22 to 185 (RVGGPADWLF…VEAAFRADAG (164 aa)) folds into the FAD-binding PCMH-type domain. Residue arginine 165 is part of the active site. Over residues 197–211 (QIARRDSSQPTRDRS) the composition is skewed to basic and acidic residues. The tract at residues 197-228 (QIARRDSSQPTRDRSAGSTFRNPAGFSSTGRA) is disordered. Residues 212–226 (AGSTFRNPAGFSSTG) are compositionally biased toward polar residues. Catalysis depends on serine 214, which acts as the Proton donor. Glutamate 296 is an active-site residue.

This sequence belongs to the MurB family. FAD is required as a cofactor.

The protein resides in the cytoplasm. It carries out the reaction UDP-N-acetyl-alpha-D-muramate + NADP(+) = UDP-N-acetyl-3-O-(1-carboxyvinyl)-alpha-D-glucosamine + NADPH + H(+). The protein operates within cell wall biogenesis; peptidoglycan biosynthesis. Functionally, cell wall formation. The chain is UDP-N-acetylenolpyruvoylglucosamine reductase from Cereibacter sphaeroides (strain ATCC 17025 / ATH 2.4.3) (Rhodobacter sphaeroides).